Consider the following 91-residue polypeptide: Small ribosomal subunit protein bS20 (91 aa).

Over residues methionine 1–asparagine 18 the composition is skewed to basic and acidic residues. The segment at methionine 1–lysine 26 is disordered.

Belongs to the bacterial ribosomal protein bS20 family.

Functionally, binds directly to 16S ribosomal RNA. The protein is Small ribosomal subunit protein bS20 of Pelodictyon phaeoclathratiforme (strain DSM 5477 / BU-1).